Consider the following 823-residue polypeptide: Protein FAM83G (823 aa).

At Ala-2 the chain carries N-acetylalanine. The tract at residues 2–312 (AFSQVQCLDD…LYLMSHSVSL (311 aa)) is DUF1669. A Phosphoserine modification is found at Ser-4. A disordered region spans residues 75–108 (DPGSEDPRGTGPSQGPEDNGVGDGEEASGADGVP). Ser-124, Ser-127, and Ser-356 each carry phosphoserine. The disordered stretch occupies residues 450 to 823 (RDTSQASAQH…AQAPRDRKDP (374 aa)). The span at 452–465 (TSQASAQHQLWKQS) shows a compositional bias: polar residues. Pro residues predominate over residues 497–508 (DPEPLPPVPKPR). Residues 529–543 (LPKEEAPQNGTDHRL) are compositionally biased toward basic and acidic residues. The segment covering 578–587 (GVEEEDDDDY) has biased composition (acidic residues). A phosphoserine mark is found at Ser-610, Ser-614, Ser-616, Ser-650, and Ser-666. 2 stretches are compositionally biased toward basic and acidic residues: residues 672–681 (RGREEADALK) and 809–823 (DSKRRAQAPRDRKDP).

It belongs to the FAM83 family. Interacts with SMAD1 (via MH2 domain); in a SMAD4-independent manner. Directly interacts (via DUF1669) with casein kinase isoforms CSNK1A1 and CSNK1A1L. In terms of processing, phosphorylated in vitro by CSNK1A1. BMP signaling induces the phosphorylation by BMPR1A at Ser-610, Ser-614 and Ser-616. Phosphorylation at Ser-610 is necessary for the activation of SMAD4-independent BMP target genes such as NEDD9 and ASNS.

The protein localises to the cytoplasm. The protein resides in the cytosol. Its subcellular location is the nucleus. Functionally, substrate for type I BMP receptor kinase involved in regulation of some target genes of the BMP signaling pathway. Also regulates the expression of several non-BMP target genes, suggesting a role in other signaling pathways. The sequence is that of Protein FAM83G (FAM83G) from Homo sapiens (Human).